A 353-amino-acid polypeptide reads, in one-letter code: uncharacterized protein (353 aa).

The first 30 residues, 1 to 30, serve as a signal peptide directing secretion; the sequence is MHLRHLFSSRLRGSLLLGSLLVVSSFSTQA.

In terms of assembly, monomer.

This is an uncharacterized protein from Escherichia coli (strain K12).